We begin with the raw amino-acid sequence, 585 residues long: Archaeosine synthase (585 aa).

One can recognise a PUA domain in the interval 516–584 (TKTVEIDGFV…IGVEIRHVEE (69 aa)).

It belongs to the archaeosine synthase type 1 family. As to quaternary structure, homodimer.

The enzyme catalyses 7-cyano-7-carbaguanosine(15) in tRNA + L-glutamine + H2O = archaeosine(15) in tRNA + L-glutamate. It functions in the pathway tRNA modification; archaeosine-tRNA biosynthesis. Its function is as follows. Is responsible for the final step in the biosynthesis of archaeosine, a modified nucleoside present in the dihydrouridine loop (D-loop) of archaeal tRNA. Catalyzes the conversion of 7-cyano-7-deazaguanine (preQ0)-modified tRNA to archaeosine-tRNA, transforming a nitrile group to a formamidine group. This Haloferax volcanii (strain ATCC 29605 / DSM 3757 / JCM 8879 / NBRC 14742 / NCIMB 2012 / VKM B-1768 / DS2) (Halobacterium volcanii) protein is Archaeosine synthase.